The chain runs to 325 residues: Tetraacyldisaccharide 4'-kinase (325 aa).

ATP is bound at residue 55-62; that stretch reads TAGGNGKT.

The protein belongs to the LpxK family.

The enzyme catalyses a lipid A disaccharide + ATP = a lipid IVA + ADP + H(+). The protein operates within glycolipid biosynthesis; lipid IV(A) biosynthesis; lipid IV(A) from (3R)-3-hydroxytetradecanoyl-[acyl-carrier-protein] and UDP-N-acetyl-alpha-D-glucosamine: step 6/6. Its function is as follows. Transfers the gamma-phosphate of ATP to the 4'-position of a tetraacyldisaccharide 1-phosphate intermediate (termed DS-1-P) to form tetraacyldisaccharide 1,4'-bis-phosphate (lipid IVA). In Salmonella paratyphi B (strain ATCC BAA-1250 / SPB7), this protein is Tetraacyldisaccharide 4'-kinase.